We begin with the raw amino-acid sequence, 230 residues long: Claudin-2 (230 aa).

Topologically, residues 1–7 (MASLGLQ) are cytoplasmic. A helical transmembrane segment spans residues 8–28 (LVGYILGLLGLLGTLVAMLLP). Residues 29–81 (SWRTSSYVGTSIVTAVGFSKGLWMECATHSTGITQCDIYSTLLGLPADIQAAQ) lie on the Extracellular side of the membrane. Cys-54 and Cys-64 are disulfide-bonded. A helical transmembrane segment spans residues 82–102 (AMMVTSSAISSLACIVSVVGM). At 103 to 116 (RCTVFCQDSRAKDR) the chain is on the cytoplasmic side. A helical membrane pass occupies residues 117-137 (LAVVGGVFFIIGGLLGFIPVA). Residues 138-162 (WNLHGILRDFYSPLVPDSMKFEIGE) are Extracellular-facing. Residues 163–183 (ALYLGIISSLFSLVAGIILCF) traverse the membrane as a helical segment. At 184-230 (SCPLQGNRSDYYDSYQAQPLATRGSPRPGQPPKAKSEFNSYSLTGYV) the chain is on the cytoplasmic side. A disordered region spans residues 205 to 230 (TRGSPRPGQPPKAKSEFNSYSLTGYV). Lys-218 participates in a covalent cross-link: Glycyl lysine isopeptide (Lys-Gly) (interchain with G-Cter in SUMO). A phosphoserine mark is found at Ser-219 and Ser-223. Residues 220–230 (EFNSYSLTGYV) are compositionally biased toward polar residues. The segment at 229-230 (YV) is interaction with TJP1, TJP2 and TJP3.

The protein belongs to the claudin family. As to quaternary structure, can form homo- and heteropolymers with other claudins to mediate paracellular barrier and channel functions of tight junctions in response to physiological stimuli. Homopolymers interact with CLDN3, but not CLDN1, homopolymers. Directly interacts with TJP1/ZO-1, TJP2/ZO-2 and TJP3/ZO-3. Post-translationally, the disulfide bond is necessary for pore formation, but is not required for correct protein trafficking.

The protein resides in the cell junction. It localises to the tight junction. It is found in the cell membrane. The enzyme catalyses Na(+)(in) = Na(+)(out). It catalyses the reaction K(+)(in) = K(+)(out). The catalysed reaction is Rb(+)(in) = Rb(+)(out). It carries out the reaction Li(+)(in) = Li(+)(out). The enzyme catalyses Cs(+)(in) = Cs(+)(out). It catalyses the reaction Ca(2+)(in) = Ca(2+)(out). The catalysed reaction is methylamine(out) = methylamine(in). It carries out the reaction choline(out) = choline(in). The enzyme catalyses H2O(in) = H2O(out). Its function is as follows. Forms paracellular channels: polymerizes in tight junction strands with cation- and water-selective channels through the strands, conveying epithelial permeability in a process known as paracellular tight junction permeability. In intestinal epithelium, allows for sodium and water fluxes from the peritoneal side to the lumen of the intestine to regulate nutrient absorption and clear enteric pathogens as part of mucosal immune response. In kidney, allows passive sodium and calcium reabsorption across proximal tubules from the lumen back to the bloodstream. In the hepatobiliary tract, allows paracellular water and cation fluxes in the hepatic perivenous areas and biliary epithelium to generate bile flow and maintain osmotic gradients. This is Claudin-2 (CLDN2) from Canis lupus familiaris (Dog).